A 207-amino-acid chain; its full sequence is FMN-dependent NADH:quinone oxidoreductase 2 (207 aa).

FMN is bound by residues Ser9, 15-17, and 97-100; these read SAS and MWNF.

Belongs to the azoreductase type 1 family. Homodimer. FMN serves as cofactor.

It catalyses the reaction 2 a quinone + NADH + H(+) = 2 a 1,4-benzosemiquinone + NAD(+). The catalysed reaction is N,N-dimethyl-1,4-phenylenediamine + anthranilate + 2 NAD(+) = 2-(4-dimethylaminophenyl)diazenylbenzoate + 2 NADH + 2 H(+). Functionally, quinone reductase that provides resistance to thiol-specific stress caused by electrophilic quinones. Also exhibits azoreductase activity. Catalyzes the reductive cleavage of the azo bond in aromatic azo compounds to the corresponding amines. This chain is FMN-dependent NADH:quinone oxidoreductase 2, found in Burkholderia lata (strain ATCC 17760 / DSM 23089 / LMG 22485 / NCIMB 9086 / R18194 / 383).